Consider the following 296-residue polypeptide: Nucleotide-binding protein M28_Spy0517 (296 aa).

An ATP-binding site is contributed by 13 to 20 (GMSGAGKT). GTP is bound at residue 63–66 (DMRS).

Belongs to the RapZ-like family.

In terms of biological role, displays ATPase and GTPase activities. This is Nucleotide-binding protein M28_Spy0517 from Streptococcus pyogenes serotype M28 (strain MGAS6180).